Consider the following 236-residue polypeptide: MTRRYWNINLKEMIEAGVHFGHGIKKWNPKMAPYISAKRKGTHITNLARTTRFLSEACDLVFDAASQGKSFLIVGTKKRAADLVASAAIRARCHYVNKKWFSGMLTNWSITKTRLSQFRDLRAEEKMEKFHHLPKRDVAILKRKLSTLLRYLGGIKYMTRLPDIVIVLDQQKEYIALRECAILGIPTISLADTNCDPDLANISIPANDDTMTSIRLILNKLVFAICEGRSLYIRNH.

The protein belongs to the universal ribosomal protein uS2 family.

It localises to the plastid. Its subcellular location is the chloroplast. This Oryza nivara (Indian wild rice) protein is Small ribosomal subunit protein uS2c (rps2).